A 411-amino-acid chain; its full sequence is Peptidase T (411 aa).

Histidine 78 contributes to the Zn(2+) binding site. Aspartate 80 is an active-site residue. Residue aspartate 140 participates in Zn(2+) binding. The active-site Proton acceptor is the glutamate 173. Zn(2+) is bound by residues glutamate 174, aspartate 196, and histidine 379.

It belongs to the peptidase M20B family. It depends on Zn(2+) as a cofactor.

It is found in the cytoplasm. It catalyses the reaction Release of the N-terminal residue from a tripeptide.. In terms of biological role, cleaves the N-terminal amino acid of tripeptides. In Yersinia pestis bv. Antiqua (strain Antiqua), this protein is Peptidase T.